Reading from the N-terminus, the 504-residue chain is Cytochrome P450 monooxygenase gliF (504 aa).

A helical transmembrane segment spans residues 13-31 (AVAVSFGVGLLYWVYRLLL). N-linked (GlcNAc...) asparagine glycosylation is found at N197 and N299. C449 is a binding site for heme.

This sequence belongs to the cytochrome P450 family. It depends on heme as a cofactor.

It is found in the membrane. It functions in the pathway mycotoxin biosynthesis. In terms of biological role, cytochrome P450 monooxygenase; part of the gene cluster that mediates the biosynthesis of gliotoxin, a member of the epipolythiodioxopiperazine (ETP) class of toxins characterized by a disulfide bridged cyclic dipeptide. The first step in gliotoxin biosynthesis is the condensation of serine and phenylalanine to form the cyclo-L-phenylalanyl-L-serine diketopiperazine (DKP) by the NRPS gliP. GliP is also able to produce the DKP cyclo-L-tryptophanyl-L-serine, suggesting that the substrate specificity of the first adenylation (A) domain in gliP is sufficiently relaxed to accommodate both L-Phe and L-Trp. The cytochrome P450 monooxygenase gliC has been shown to catalyze the subsequent hydroxylation of the alpha-carbon of L-Phe in cyclo-L-phenylalanyl-L-serine whereas the second cytochrome P450 enzyme, gliF, is presumably involved in the modification of the DKP side chain. The glutathione S-transferase (GST) gliG then forms a bis-glutathionylated biosynthetic intermediate which is responsible for the sulfurization of gliotoxin. This bis-glutathionylated intermediate is subsequently processed by the gamma-glutamyl cyclotransferase gliK to remove both gamma-glutamyl moieties. Subsequent processing via gliI yields a biosynthetic intermediate, which is N-methylated via the N-methyltransferase gliN, before the gliotoxin oxidoreductase gliT-mediated disulfide bridge closure. GliN-mediated amide methylation confers stability to ETP, damping the spontaneous formation of tri- and tetrasulfides. Intracellular dithiol gliotoxin oxidized by gliT is subsequently effluxed by gliA. Gliotoxin contributes to pathogenesis during invasive aspergillosis. In macrophages and neutrophils, gliotoxin showed inhibition of various different cell functions including cytokine production, antigen presentation, phagocytosis, and production of reactive oxygen species. The chain is Cytochrome P450 monooxygenase gliF from Aspergillus fumigatus (strain ATCC MYA-4609 / CBS 101355 / FGSC A1100 / Af293) (Neosartorya fumigata).